The following is a 507-amino-acid chain: Lysine--tRNA ligase (507 aa).

2 residues coordinate Mg(2+): E406 and E413.

The protein belongs to the class-II aminoacyl-tRNA synthetase family. Homodimer. Mg(2+) serves as cofactor.

The protein localises to the cytoplasm. It carries out the reaction tRNA(Lys) + L-lysine + ATP = L-lysyl-tRNA(Lys) + AMP + diphosphate. The polypeptide is Lysine--tRNA ligase (Wolinella succinogenes (strain ATCC 29543 / DSM 1740 / CCUG 13145 / JCM 31913 / LMG 7466 / NCTC 11488 / FDC 602W) (Vibrio succinogenes)).